The chain runs to 320 residues: Coproporphyrin III ferrochelatase (320 aa).

Residues histidine 194 and glutamate 273 each contribute to the Fe(2+) site.

It belongs to the ferrochelatase family.

The protein localises to the cytoplasm. It carries out the reaction Fe-coproporphyrin III + 2 H(+) = coproporphyrin III + Fe(2+). It functions in the pathway porphyrin-containing compound metabolism; protoheme biosynthesis. In terms of biological role, involved in coproporphyrin-dependent heme b biosynthesis. Catalyzes the insertion of ferrous iron into coproporphyrin III to form Fe-coproporphyrin III. The protein is Coproporphyrin III ferrochelatase of Symbiobacterium thermophilum (strain DSM 24528 / JCM 14929 / IAM 14863 / T).